Reading from the N-terminus, the 371-residue chain is MNSCFIILAGGESKRFNSNTPKPYTNYKGKPLLLHSIDKAKVFNKFNKIVLVVNKKHKNFIKKLNIKNIRIITGGKTRAESAYNALKSIKENNFKNVIIHDAARPNFSLKLLNKLMNELKLNDCVIPAIQTADTVKQKISNNVKNLKRENIYLIQTPQAFNYKKLFELQNNKSEEVTDDANLFVRAGKKIKIIKGETTNNKITINSDIKFNNLIKFGIGFDVHRLVPNKKLYLGGVKIPSPIGTLGHSDGDPVLHAVTDAILGACSMGDIGEKFSDKNKKFKNIRSTILLSEIIKQTLKKGYLINNLDINIITQKPKIQKYKKQILNCIAKICNISPTQINIKGKTTEKLGVIGKEKAIACEVIASVIKND.

The segment at Met-1–Ile-214 is 2-C-methyl-D-erythritol 4-phosphate cytidylyltransferase. The tract at residues Lys-215–Asp-371 is 2-C-methyl-D-erythritol 2,4-cyclodiphosphate synthase. 2 residues coordinate a divalent metal cation: Asp-221 and His-223. Residues Asp-221–His-223 and His-247–Ser-248 contribute to the 4-CDP-2-C-methyl-D-erythritol 2-phosphate site. A divalent metal cation is bound at residue His-255. Residues Asp-269–Gly-271, Phe-274–Asn-278, and Lys-355 each bind 4-CDP-2-C-methyl-D-erythritol 2-phosphate.

It in the N-terminal section; belongs to the IspD/TarI cytidylyltransferase family. IspD subfamily. The protein in the C-terminal section; belongs to the IspF family. Requires a divalent metal cation as cofactor.

It catalyses the reaction 2-C-methyl-D-erythritol 4-phosphate + CTP + H(+) = 4-CDP-2-C-methyl-D-erythritol + diphosphate. The catalysed reaction is 4-CDP-2-C-methyl-D-erythritol 2-phosphate = 2-C-methyl-D-erythritol 2,4-cyclic diphosphate + CMP. Its pathway is isoprenoid biosynthesis; isopentenyl diphosphate biosynthesis via DXP pathway; isopentenyl diphosphate from 1-deoxy-D-xylulose 5-phosphate: step 2/6. It functions in the pathway isoprenoid biosynthesis; isopentenyl diphosphate biosynthesis via DXP pathway; isopentenyl diphosphate from 1-deoxy-D-xylulose 5-phosphate: step 4/6. Functionally, bifunctional enzyme that catalyzes the formation of 4-diphosphocytidyl-2-C-methyl-D-erythritol from CTP and 2-C-methyl-D-erythritol 4-phosphate (MEP) (IspD), and catalyzes the conversion of 4-diphosphocytidyl-2-C-methyl-D-erythritol 2-phosphate (CDP-ME2P) to 2-C-methyl-D-erythritol 2,4-cyclodiphosphate (ME-CPP) with a corresponding release of cytidine 5-monophosphate (CMP) (IspF). In Pelagibacter ubique (strain HTCC1062), this protein is Bifunctional enzyme IspD/IspF.